The primary structure comprises 240 residues: Probable metal transport system ATP-binding protein TM_0124 (240 aa).

An ABC transporter domain is found at 4–223; that stretch reads VEVKNLTYRI…LKKIFTDFDI (220 aa). 36-43 is an ATP binding site; sequence GPNGAGKT.

It belongs to the ABC transporter superfamily.

Its function is as follows. Part of an ATP-driven transport system TM_0123/TM_0124/TM_0125 for a metal. Probably responsible for energy coupling to the transport system. This is Probable metal transport system ATP-binding protein TM_0124 from Thermotoga maritima (strain ATCC 43589 / DSM 3109 / JCM 10099 / NBRC 100826 / MSB8).